We begin with the raw amino-acid sequence, 446 residues long: Phosphoglucosamine mutase (446 aa).

The active-site Phosphoserine intermediate is Ser88. Mg(2+)-binding residues include Ser88, Asp231, Asp233, and Asp235. The residue at position 88 (Ser88) is a Phosphoserine.

This sequence belongs to the phosphohexose mutase family. Mg(2+) is required as a cofactor. Post-translationally, activated by phosphorylation.

The enzyme catalyses alpha-D-glucosamine 1-phosphate = D-glucosamine 6-phosphate. Catalyzes the conversion of glucosamine-6-phosphate to glucosamine-1-phosphate. The protein is Phosphoglucosamine mutase of Methanococcus vannielii (strain ATCC 35089 / DSM 1224 / JCM 13029 / OCM 148 / SB).